The sequence spans 388 residues: Chorismate synthase (388 aa).

R39 and R45 together coordinate NADP(+). FMN contacts are provided by residues 130 to 132, 251 to 252, G296, 311 to 315, and R337; these read RSS, NA, and KPIPT.

The protein belongs to the chorismate synthase family. As to quaternary structure, homotetramer. The cofactor is FMNH2.

It carries out the reaction 5-O-(1-carboxyvinyl)-3-phosphoshikimate = chorismate + phosphate. The protein operates within metabolic intermediate biosynthesis; chorismate biosynthesis; chorismate from D-erythrose 4-phosphate and phosphoenolpyruvate: step 7/7. In terms of biological role, catalyzes the anti-1,4-elimination of the C-3 phosphate and the C-6 proR hydrogen from 5-enolpyruvylshikimate-3-phosphate (EPSP) to yield chorismate, which is the branch point compound that serves as the starting substrate for the three terminal pathways of aromatic amino acid biosynthesis. This reaction introduces a second double bond into the aromatic ring system. The protein is Chorismate synthase of Streptococcus thermophilus (strain CNRZ 1066).